The chain runs to 163 residues: NF-kappa-B inhibitor-interacting Ras-like protein 2 (163 aa).

The tract at residues 1–163 is small GTPase-like; the sequence is MGKSCKVVIC…SANWNLHPDH (163 aa). 11–18 contributes to the GTP binding site; it reads GQHGVGKT. The Effector region signature appears at 35 to 43; it reads MIETQEDIY. GTP contacts are provided by residues 61-65 and 120-123; these read DTRGL and NKSD.

This sequence belongs to the small GTPase superfamily. Ras family. KappaB-Ras subfamily.

It is found in the cytoplasm. Functionally, atypical Ras-like protein that acts as a potent regulator of NF-kappa-B activity by preventing the degradation of NF-kappa-B inhibitor beta (NFKBIB) by most signals, explaining why NFKBIB is more resistant to degradation. The polypeptide is NF-kappa-B inhibitor-interacting Ras-like protein 2 (nkiras2) (Xenopus laevis (African clawed frog)).